The following is a 179-amino-acid chain: Segregation and condensation protein B (179 aa).

This sequence belongs to the ScpB family. Homodimer. Homodimerization may be required to stabilize the binding of ScpA to the Smc head domains. Component of a cohesin-like complex composed of ScpA, ScpB and the Smc homodimer, in which ScpA and ScpB bind to the head domain of Smc. The presence of the three proteins is required for the association of the complex with DNA.

The protein localises to the cytoplasm. Functionally, participates in chromosomal partition during cell division. May act via the formation of a condensin-like complex containing Smc and ScpA that pull DNA away from mid-cell into both cell halves. In Clostridioides difficile (strain 630) (Peptoclostridium difficile), this protein is Segregation and condensation protein B.